A 123-amino-acid polypeptide reads, in one-letter code: Putative acidic leucine-rich nuclear phosphoprotein 32 family member C (123 aa).

LRR repeat units follow at residues 43–64 (ELEFLSTINVGLTFISNLPKLN), 65–87 (KLKKLELSENRISGDLEVLAEKC), 89–110 (NLKHLNLSGNKIKDLSTIELLK), and 114–123 (NLKSLDLFNC).

Belongs to the ANP32 family.

The sequence is that of Putative acidic leucine-rich nuclear phosphoprotein 32 family member C (Anp32c) from Mus musculus (Mouse).